Reading from the N-terminus, the 248-residue chain is Anamorsin homolog (248 aa).

Residues 4-129 (FKGLQKTLYI…ETGSSARLSF (126 aa)) are N-terminal SAM-like domain. Positions 130-161 (AKKDASALNVWKISGDDEELIDEEDLLDEEDK) are linker. [2Fe-2S] cluster is bound by residues cysteine 172, cysteine 181, cysteine 184, and cysteine 186. The segment at 172-186 (CSTTGKRKACKNCSC) is fe-S binding site A. 4 residues coordinate [4Fe-4S] cluster: cysteine 209, cysteine 212, cysteine 220, and cysteine 223. 2 short sequence motifs (cx2C motif) span residues 209 to 212 (CGNC) and 220 to 223 (CSTC). The fe-S binding site B stretch occupies residues 209 to 223 (CGNCYLGDAFRCSTC).

Belongs to the anamorsin family. In terms of assembly, monomer. [2Fe-2S] cluster is required as a cofactor. Requires [4Fe-4S] cluster as cofactor.

Its subcellular location is the cytoplasm. It localises to the mitochondrion intermembrane space. Its function is as follows. Component of the cytosolic iron-sulfur (Fe-S) protein assembly (CIA) machinery. Required for the maturation of extramitochondrial Fe-S proteins. Part of an electron transfer chain functioning in an early step of cytosolic Fe-S biogenesis, facilitating the de novo assembly of a [4Fe-4S] cluster on the cytosolic Fe-S scaffold complex. Electrons are transferred from NADPH via a FAD- and FMN-containing diflavin oxidoreductase. Together with the diflavin oxidoreductase, also required for the assembly of the diferric tyrosyl radical cofactor of ribonucleotide reductase (RNR), probably by providing electrons for reduction during radical cofactor maturation in the catalytic small subunit. This chain is Anamorsin homolog, found in Drosophila ananassae (Fruit fly).